The primary structure comprises 172 residues: Gastrula zinc finger protein XlCGF51.1A (172 aa).

6 consecutive C2H2-type zinc fingers follow at residues 6–28 (FSCSDCGARFTYRSLLRRHNKIH), 34–56 (LICSECGKPFTSESALTAHQRSH), 62–84 (FSCTDCEKCFAQRMHLIEHQRTH), 90–112 (FSCTVCGEMFTYRAQFSKHMLKH), 122–144 (LDCSHCGKHFTSRSDLTVHRKSH), and 150–172 (LQCSDCGKCFKYQSQLASHQRVH).

The protein belongs to the krueppel C2H2-type zinc-finger protein family.

The protein resides in the nucleus. Functionally, may be involved in transcriptional regulation. The chain is Gastrula zinc finger protein XlCGF51.1A from Xenopus laevis (African clawed frog).